Here is a 72-residue protein sequence, read N- to C-terminus: Toxin Acra II-3 (72 aa).

The LCN-type CS-alpha/beta domain maps to 4–67 (PGNYPLDTRG…VWNAAKNYCK (64 aa)). Intrachain disulfides connect C18–C41, C27–C46, and C31–C48.

This sequence belongs to the long (3 C-C) scorpion toxin superfamily. Sodium channel inhibitor family. Beta subfamily. As to expression, expressed by the venom gland.

It localises to the secreted. Binds to sodium channels (Nav) and affects the channel activation process. The polypeptide is Toxin Acra II-3 (Androctonus crassicauda (Arabian fat-tailed scorpion)).